Here is a 222-residue protein sequence, read N- to C-terminus: Peptidyl-prolyl cis-trans isomerase FKBP7 (222 aa).

Residues 1–23 (MPKTMHFLFRFIVFFYLWGLFTA) form the signal peptide. The N-linked (GlcNAc...) asparagine glycan is linked to N45. The PPIase FKBP-type domain maps to 53–145 (GDLLNAHYDG…IFEIELYAVT (93 aa)). 2 EF-hand domains span residues 145–180 (TKGP…EFEK) and 189–222 (YQDA…HDEL). Residues D158, D160, D162, Q164, E169, D202, D204, D206, and E213 each contribute to the Ca(2+) site. Residues 200-222 (KNDHDGDGFISPKEYNVYQHDEL) form a disordered region. Residues 219–222 (HDEL) carry the Retention in the endoplasmic reticulum motif.

Post-translationally, glycosylated.

The protein localises to the endoplasmic reticulum lumen. The enzyme catalyses [protein]-peptidylproline (omega=180) = [protein]-peptidylproline (omega=0). Its function is as follows. PPIases accelerate the folding of proteins during protein synthesis. The sequence is that of Peptidyl-prolyl cis-trans isomerase FKBP7 (FKBP7) from Homo sapiens (Human).